A 364-amino-acid chain; its full sequence is Mannonate dehydratase (364 aa).

Belongs to the mannonate dehydratase family. Fe(2+) serves as cofactor. The cofactor is Mn(2+).

The catalysed reaction is D-mannonate = 2-dehydro-3-deoxy-D-gluconate + H2O. The protein operates within carbohydrate metabolism; pentose and glucuronate interconversion. In terms of biological role, catalyzes the dehydration of D-mannonate. The chain is Mannonate dehydratase from Streptococcus equi subsp. zooepidemicus (strain MGCS10565).